Reading from the N-terminus, the 756-residue chain is Catalase-peroxidase (756 aa).

The segment at residues 91–244 (WHSAGTYRTG…LAAVQMGLIY (154 aa)) is a cross-link (tryptophyl-tyrosyl-methioninium (Trp-Tyr) (with M-270)). His-92 functions as the Proton acceptor in the catalytic mechanism. The interval 198–230 (AQKKMQQPGDGTLVAEPENHANEESRTASGERN) is disordered. Residues 214 to 223 (PENHANEESR) are compositionally biased toward basic and acidic residues. The tryptophyl-tyrosyl-methioninium (Tyr-Met) (with W-91) cross-link spans 244–270 (YVNPEGPEGVPDPVASARDIRETFGRM). His-285 provides a ligand contact to heme b. The interval 371 to 390 (KNGAGAGKIPDAHDPSKRHA) is disordered.

The protein belongs to the peroxidase family. Peroxidase/catalase subfamily. In terms of assembly, homodimer or homotetramer. Heme b serves as cofactor. Formation of the three residue Trp-Tyr-Met cross-link is important for the catalase, but not the peroxidase activity of the enzyme.

It carries out the reaction H2O2 + AH2 = A + 2 H2O. The enzyme catalyses 2 H2O2 = O2 + 2 H2O. In terms of biological role, bifunctional enzyme with both catalase and broad-spectrum peroxidase activity. The chain is Catalase-peroxidase from Pseudomonas syringae pv. tomato (strain ATCC BAA-871 / DC3000).